A 570-amino-acid polypeptide reads, in one-letter code: Periplasmic trehalase (570 aa).

The first 34 residues, M1–A34, serve as a signal peptide directing secretion. Residues R159, W166–D167, N203, R212–Q214, R284–E286, and G317 each bind substrate. Active-site proton donor/acceptor residues include D319 and E503. E518 serves as a coordination point for substrate. The segment at K544–Q570 is disordered. Low complexity predominate over residues P554–Q570.

Belongs to the glycosyl hydrolase 37 family. As to quaternary structure, monomer.

Its subcellular location is the periplasm. The enzyme catalyses alpha,alpha-trehalose + H2O = alpha-D-glucose + beta-D-glucose. Functionally, provides the cells with the ability to utilize trehalose at high osmolarity by splitting it into glucose molecules that can subsequently be taken up by the phosphotransferase-mediated uptake system. The polypeptide is Periplasmic trehalase (Salmonella choleraesuis (strain SC-B67)).